Consider the following 987-residue polypeptide: Centrosomal protein of 120 kDa (987 aa).

The C2 1 domain maps to 1-112 (MVSKSDQLLI…QETKQAPKWY (112 aa)). Positions 352–408 (KTQNEHEPHHSKKRVLTPIKENTHTGPQSPSESPVPPHNQSPPTKDDATESEVESLL) are disordered. The C2 2 domain occupies 438–567 (SEAASGQKIA…LSSEKTRFLG (130 aa)). A coiled-coil region spans residues 670 to 919 (ENQLKQKELA…RLRQQEQKQY (250 aa)). Basic and acidic residues predominate over residues 912–926 (RQQEQKQYPDSREIA). Positions 912 to 937 (RQQEQKQYPDSREIASGKMDGPHGSA) are disordered. Serine 936 is modified (phosphoserine).

It belongs to the CEP120 family. As to quaternary structure, interacts with TACC2 and TACC3. Interacts with CCDC52.

It is found in the cytoplasm. It localises to the cytoskeleton. The protein localises to the microtubule organizing center. The protein resides in the centrosome. Functionally, plays a role in the microtubule-dependent coupling of the nucleus and the centrosome. Involved in the processes that regulate centrosome-mediated interkinetic nuclear migration (INM) of neural progenitors and for proper positioning of neurons during brain development. Also implicated in the migration and selfrenewal of neural progenitors. May play a role in centriole duplication during mitosis. Required for the recruitment of CEP295 to the proximal end of new-born centrioles at the centriolar microtubule wall during early S phase in a PLK4-dependent manner. The polypeptide is Centrosomal protein of 120 kDa (CEP120) (Bos taurus (Bovine)).